The sequence spans 124 residues: Small ribosomal subunit protein eS8 (124 aa).

Residues 1-22 (MQYQGRSKRSKTGARLRPRSKK) are compositionally biased toward basic residues. Disordered regions lie at residues 1–40 (MQYQ…GEPR) and 102–124 (AGTA…RVDE). The segment covering 23–32 (SKSELGREPT) has biased composition (basic and acidic residues). The segment covering 106–124 (RVTSRPGQDGQVNATRVDE) has biased composition (polar residues).

It belongs to the eukaryotic ribosomal protein eS8 family. Part of the 30S ribosomal subunit.

This is Small ribosomal subunit protein eS8 from Halobacterium salinarum (strain ATCC 29341 / DSM 671 / R1).